Consider the following 150-residue polypeptide: Large ribosomal subunit protein bL9 (150 aa).

The protein belongs to the bacterial ribosomal protein bL9 family.

In terms of biological role, binds to the 23S rRNA. This Mycoplasmopsis pulmonis (strain UAB CTIP) (Mycoplasma pulmonis) protein is Large ribosomal subunit protein bL9.